The sequence spans 143 residues: Transcriptional regulator MraZ (143 aa).

2 SpoVT-AbrB domains span residues 5–47 and 76–119; these read THHP…PRAE and TDEQ…NAER.

The protein belongs to the MraZ family. Forms oligomers.

The protein resides in the cytoplasm. The protein localises to the nucleoid. The polypeptide is Transcriptional regulator MraZ (Saccharopolyspora erythraea (strain ATCC 11635 / DSM 40517 / JCM 4748 / NBRC 13426 / NCIMB 8594 / NRRL 2338)).